We begin with the raw amino-acid sequence, 528 residues long: Benzoylformate decarboxylase (528 aa).

Positions 117, 118, and 120 each coordinate Mg(2+). The segment at 377–460 is thiamine pyrophosphate binding; the sequence is TSTTAQMWQR…VIMNNGTYGA (84 aa). The Ca(2+) site is built by Asp428, Asn455, and Thr457.

It belongs to the TPP enzyme family. As to quaternary structure, homotetramer. Ca(2+) is required as a cofactor. The cofactor is thiamine diphosphate. Mg(2+) serves as cofactor.

It catalyses the reaction phenylglyoxylate + H(+) = benzaldehyde + CO2. Its pathway is aromatic compound metabolism; (R)-mandelate degradation; benzoate from (R)-mandelate: step 3/4. This is Benzoylformate decarboxylase (mdlC) from Pseudomonas putida (Arthrobacter siderocapsulatus).